Reading from the N-terminus, the 130-residue chain is ATP synthase epsilon chain (130 aa).

It belongs to the ATPase epsilon chain family. In terms of assembly, F-type ATPases have 2 components, CF(1) - the catalytic core - and CF(0) - the membrane proton channel. CF(1) has five subunits: alpha(3), beta(3), gamma(1), delta(1), epsilon(1). CF(0) has three main subunits: a, b and c.

The protein localises to the cell membrane. Produces ATP from ADP in the presence of a proton gradient across the membrane. The sequence is that of ATP synthase epsilon chain from Nocardia farcinica (strain IFM 10152).